We begin with the raw amino-acid sequence, 128 residues long: Centrosomal protein 15 (128 aa).

The protein localises to the cell projection. It is found in the cilium. May play a role in ciliary assembly. The protein is Centrosomal protein 15 (CEP15) of Bos taurus (Bovine).